The following is a 384-amino-acid chain: Chaperone protein DnaJ (384 aa).

In terms of domain architecture, J spans 5-70 (DYYEVLGVSK…DKKAAYDRYG (66 aa)). The segment at 16–47 (ASSDDIKKGYRRKAKELHPDRNKDDPNAEAQF) is disordered. The segment covering 31-47 (ELHPDRNKDDPNAEAQF) has biased composition (basic and acidic residues). The CR-type zinc-finger motif lies at 143 to 221 (GLQKTINVPT…CQGAGRVEKD (79 aa)). Zn(2+) contacts are provided by cysteine 156, cysteine 159, cysteine 173, cysteine 176, cysteine 195, cysteine 198, cysteine 209, and cysteine 212. CXXCXGXG motif repeat units lie at residues 156-163 (CKTCNGSG), 173-180 (CPTCSGMG), 195-202 (CPTCSGLG), and 209-216 (CKSCQGAG).

Belongs to the DnaJ family. Homodimer. It depends on Zn(2+) as a cofactor.

It localises to the cytoplasm. Participates actively in the response to hyperosmotic and heat shock by preventing the aggregation of stress-denatured proteins and by disaggregating proteins, also in an autonomous, DnaK-independent fashion. Unfolded proteins bind initially to DnaJ; upon interaction with the DnaJ-bound protein, DnaK hydrolyzes its bound ATP, resulting in the formation of a stable complex. GrpE releases ADP from DnaK; ATP binding to DnaK triggers the release of the substrate protein, thus completing the reaction cycle. Several rounds of ATP-dependent interactions between DnaJ, DnaK and GrpE are required for fully efficient folding. Also involved, together with DnaK and GrpE, in the DNA replication of plasmids through activation of initiation proteins. This chain is Chaperone protein DnaJ, found in Roseobacter denitrificans (strain ATCC 33942 / OCh 114) (Erythrobacter sp. (strain OCh 114)).